Here is a 238-residue protein sequence, read N- to C-terminus: Large ribosomal subunit protein uL1 (238 aa).

Belongs to the universal ribosomal protein uL1 family. In terms of assembly, part of the 50S ribosomal subunit.

Functionally, binds directly to 23S rRNA. The L1 stalk is quite mobile in the ribosome, and is involved in E site tRNA release. In terms of biological role, protein L1 is also a translational repressor protein, it controls the translation of the L11 operon by binding to its mRNA. This is Large ribosomal subunit protein uL1 from Gloeobacter violaceus (strain ATCC 29082 / PCC 7421).